The primary structure comprises 497 residues: Transmembrane protein 200A (497 aa).

Residues 1–61 (MIATGGVITG…RGKIRLYSAS (61 aa)) are Cytoplasmic-facing. Residues 20–30 (TRSQYHLSAQS) show a composition bias toward polar residues. The interval 20-44 (TRSQYHLSAQSPGPAPEKKTTKRKP) is disordered. A helical transmembrane segment spans residues 62 to 82 (GFFLVLGVLILMAGIAMAVLG). Topologically, residues 83-127 (YWPHKDQPKAPETKMSANNTQSFGREQAGSIAQFLEQHMHSEKMK) are extracellular. Asparagine 100 carries N-linked (GlcNAc...) asparagine glycosylation. Residues 128–148 (MLGPFTMGIGIFIFICANAIL) traverse the membrane as a helical segment. Residues 149 to 497 (HENRDRETKV…LKRGTSETRF (349 aa)) are Cytoplasmic-facing. The span at 353–375 (SNSATESASSTSSRSSLSPGSTS) shows a compositional bias: low complexity. Disordered regions lie at residues 353-385 (SNSA…GAAR) and 400-438 (HSKS…GYTR). Basic and acidic residues predominate over residues 427–438 (RLDRSNSKGYTR).

This sequence belongs to the TMEM200 family.

It localises to the membrane. This Danio rerio (Zebrafish) protein is Transmembrane protein 200A (tmem200a).